We begin with the raw amino-acid sequence, 440 residues long: Ribosomal protein uS12 methylthiotransferase RimO (440 aa).

The 116-residue stretch at 2–117 (VKVGFVSLGC…LPNVIKKLYE (116 aa)) folds into the MTTase N-terminal domain. 6 residues coordinate [4Fe-4S] cluster: Cys-11, Cys-47, Cys-80, Cys-156, Cys-160, and Cys-163. The 230-residue stretch at 142–371 (ATPKFYAYIK…LNLQRKISLE (230 aa)) folds into the Radical SAM core domain. The TRAM domain maps to 374-440 (RKRISKKYEV…FEYDLVGEVI (67 aa)).

This sequence belongs to the methylthiotransferase family. RimO subfamily. It depends on [4Fe-4S] cluster as a cofactor.

Its subcellular location is the cytoplasm. It catalyses the reaction L-aspartate(89)-[ribosomal protein uS12]-hydrogen + (sulfur carrier)-SH + AH2 + 2 S-adenosyl-L-methionine = 3-methylsulfanyl-L-aspartate(89)-[ribosomal protein uS12]-hydrogen + (sulfur carrier)-H + 5'-deoxyadenosine + L-methionine + A + S-adenosyl-L-homocysteine + 2 H(+). Catalyzes the methylthiolation of an aspartic acid residue of ribosomal protein uS12. This is Ribosomal protein uS12 methylthiotransferase RimO from Caldicellulosiruptor saccharolyticus (strain ATCC 43494 / DSM 8903 / Tp8T 6331).